Here is a 383-residue protein sequence, read N- to C-terminus: BRISC and BRCA1-A complex member 2 (383 aa).

Met1 carries the N-acetylmethionine modification. Residue Ser2 is modified to Phosphoserine. UEV-like stretches follow at residues 30-147 (DATN…TLLE) and 275-364 (IAAF…RAKA).

The protein belongs to the BABAM2 family. In terms of assembly, component of the ARISC complex, at least composed of UIMC1/RAP80, ABRAXAS1, BRCC3/BRCC36, BABAM2 and BABAM1/NBA1. Component of the BRCA1-A complex, at least composed of BRCA1, BARD1, UIMC1/RAP80, ABRAXAS1, BRCC3/BRCC36, BABAM2 and BABAM1/NBA1. In the BRCA1-A complex, interacts directly with ABRAXAS1, BRCC3/BRCC36 and BABAM1/NBA1. Binds polyubiquitin. Component of the BRISC complex, at least composed of ABRAXAS2, BRCC3/BRCC36, BABAM2 and BABAM1/NBA1. Identified in a complex with SHMT2 and the other subunits of the BRISC complex. Component of the BRCA1/BRCA2 containing complex (BRCC), which also contains BRCA1, BRCA2, BARD1, BRCC3/BRCC36 and RAD51. BRCC is a ubiquitin E3 ligase complex that enhances cellular survival following DNA damage. May interact with FAS and TNFRSF1A. As to expression, expressed in all cell lines examined. Highly expressed in placenta.

Its subcellular location is the cytoplasm. It localises to the nucleus. In terms of biological role, component of the BRCA1-A complex, a complex that specifically recognizes 'Lys-63'-linked ubiquitinated histones H2A and H2AX at DNA lesions sites, leading to target the BRCA1-BARD1 heterodimer to sites of DNA damage at double-strand breaks (DSBs). The BRCA1-A complex also possesses deubiquitinase activity that specifically removes 'Lys-63'-linked ubiquitin on histones H2A and H2AX. In the BRCA1-A complex, it acts as an adapter that bridges the interaction between BABAM1/NBA1 and the rest of the complex, thereby being required for the complex integrity and modulating the E3 ubiquitin ligase activity of the BRCA1-BARD1 heterodimer. Component of the BRISC complex, a multiprotein complex that specifically cleaves 'Lys-63'-linked ubiquitin in various substrates. Within the BRISC complex, acts as an adapter that bridges the interaction between BABAM1/NBA1 and the rest of the complex, thereby being required for the complex integrity. The BRISC complex is required for normal mitotic spindle assembly and microtubule attachment to kinetochores via its role in deubiquitinating NUMA1. The BRISC complex plays a role in interferon signaling via its role in the deubiquitination of the interferon receptor IFNAR1; deubiquitination increases IFNAR1 activity by enhancing its stability and cell surface expression. Down-regulates the response to bacterial lipopolysaccharide (LPS) via its role in IFNAR1 deubiquitination. May play a role in homeostasis or cellular differentiation in cells of neural, epithelial and germline origins. May also act as a death receptor-associated anti-apoptotic protein, which inhibits the mitochondrial apoptotic pathway. May regulate TNF-alpha signaling through its interactions with TNFRSF1A; however these effects may be indirect. The polypeptide is BRISC and BRCA1-A complex member 2 (Homo sapiens (Human)).